Reading from the N-terminus, the 895-residue chain is Endochitinase 2 (895 aa).

The N-terminal stretch at 1 to 22 (MGLTNILAAFIAVSSLFIQSLA) is a signal peptide. Residues 29-340 (SNLAVYWGQG…DIMKEVLLRC (312 aa)) enclose the GH18 domain. N-linked (GlcNAc...) asparagine glycosylation is present at Asn-90. Glu-175 (proton donor) is an active-site residue. Residues 343–712 (DPPTSTVTST…APSSSTTEDR (370 aa)) are disordered. The span at 346 to 425 (TSTVTSTISA…ISTRSASTET (80 aa)) shows a compositional bias: low complexity. The segment covering 426–478 (VTTRSQEPPSTTISTRPASTETVTTRSQEPPSSTISTRSASTETVTTRSQEPP) has biased composition (polar residues). A compositionally biased stretch (low complexity) spans 479-505 (SSTISTRSASTETSTSSQDSPSTTIST). Over residues 506-543 (KSAPTGTVTTRSQDLPSTTISTRSPETETETVTTKSQD) the composition is skewed to polar residues. A compositionally biased stretch (low complexity) spans 544-555 (SPSITLSTRSSS). Residues 556–577 (AETVSTRSQHSSSTTISTKSAP) show a composition bias toward polar residues. Residues 578–589 (TETGTTSEHSTS) show a composition bias toward low complexity. Residues 590–657 (MPVSTRSAST…ISTELPSQTH (68 aa)) show a composition bias toward polar residues. 2 stretches are compositionally biased toward low complexity: residues 658-692 (STTD…APTT) and 699-712 (TLTL…TEDR). Residue Gly-866 is the site of GPI-anchor amidated glycine attachment. Positions 867 to 895 (GAMTVRSMDVVAKALITAGAAVLGLFLGL) are cleaved as a propeptide — removed in mature form.

It belongs to the glycosyl hydrolase 18 family. Chitinase class III subfamily.

The protein resides in the cell membrane. The catalysed reaction is Random endo-hydrolysis of N-acetyl-beta-D-glucosaminide (1-&gt;4)-beta-linkages in chitin and chitodextrins.. Functionally, may be associated with endosporulation. This chain is Endochitinase 2 (CTS2), found in Coccidioides immitis (strain RS) (Valley fever fungus).